A 422-amino-acid chain; its full sequence is Protein MANNAN SYNTHESIS-RELATED 1 (422 aa).

Residues 1–6 (MGVDLR) are Cytoplasmic-facing. Residues 7-26 (QVVAGILTITMFVMLGQMLH) traverse the membrane as a helical; Signal-anchor for type II membrane protein segment. The Lumenal segment spans residues 27–422 (RDYFDSLQEK…KNHLAYSCFC (396 aa)). 263 to 265 (DLR) is a binding site for substrate.

Belongs to the glycosyltransferase GT106 family. As to expression, widely expressed.

The protein resides in the golgi apparatus membrane. It functions in the pathway glycan biosynthesis. Functionally, glycosyltransferase involved in mannan biosynthesis. This chain is Protein MANNAN SYNTHESIS-RELATED 1, found in Arabidopsis thaliana (Mouse-ear cress).